The sequence spans 201 residues: Translation initiation factor IF-3 (201 aa).

The protein belongs to the IF-3 family. As to quaternary structure, monomer.

It localises to the cytoplasm. In terms of biological role, IF-3 binds to the 30S ribosomal subunit and shifts the equilibrium between 70S ribosomes and their 50S and 30S subunits in favor of the free subunits, thus enhancing the availability of 30S subunits on which protein synthesis initiation begins. This chain is Translation initiation factor IF-3, found in Mycoplasma pneumoniae (strain ATCC 29342 / M129 / Subtype 1) (Mycoplasmoides pneumoniae).